Reading from the N-terminus, the 177-residue chain is UPF0114 protein jhp_0175 (177 aa).

The next 3 membrane-spanning stretches (helical) occupy residues 15 to 35 (WLLA…GYVF), 54 to 74 (LVLS…VLMV), and 145 to 165 (PIFW…LTAV).

This sequence belongs to the UPF0114 family.

It localises to the cell membrane. The polypeptide is UPF0114 protein jhp_0175 (Helicobacter pylori (strain J99 / ATCC 700824) (Campylobacter pylori J99)).